Reading from the N-terminus, the 345-residue chain is Acetylserotonin O-methyltransferase (345 aa).

S-adenosyl-L-methionine contacts are provided by residues Tyr147, Trp164, Asp210, 235-237 (GDF), and Arg252. His255 serves as the catalytic Proton donor/acceptor. Substrate contacts are provided by Asp256, Asn302, and Gln306.

This sequence belongs to the class I-like SAM-binding methyltransferase superfamily. Cation-independent O-methyltransferase family. In terms of assembly, homodimer. In terms of tissue distribution, highly expressed in pineal gland. In the retina, 10- to 100-fold lower expression compared to pineal gland, if any.

The enzyme catalyses N-acetylserotonin + S-adenosyl-L-methionine = melatonin + S-adenosyl-L-homocysteine + H(+). The protein operates within aromatic compound metabolism; melatonin biosynthesis; melatonin from serotonin: step 1/2. In terms of biological role, catalyzes the transfer of a methyl group onto N-acetylserotonin, producing melatonin (N-acetyl-5-methoxytryptamine). This is Acetylserotonin O-methyltransferase (ASMT) from Macaca mulatta (Rhesus macaque).